The following is a 259-amino-acid chain: Adenosylcobinamide-GDP ribazoletransferase (259 aa).

Helical transmembrane passes span 36-56 (FSPLIGVLIGVLQVSVLILLL), 65-85 (MPFIAIALGLWITGGIHVDGL), 108-128 (IGASGIIALTINLLLQIAALF), 133-153 (LILFAIPIASFWGRYSQIWAI), 175-195 (GFLIESIPSYAFLSFLIFILI), 201-221 (IISTPNLIIGIIVGFLPALII), and 238-258 (GASVVLVETCMLIIFSIILPA).

It belongs to the CobS family. Mg(2+) is required as a cofactor.

It is found in the cell inner membrane. The catalysed reaction is alpha-ribazole + adenosylcob(III)inamide-GDP = adenosylcob(III)alamin + GMP + H(+). The enzyme catalyses alpha-ribazole 5'-phosphate + adenosylcob(III)inamide-GDP = adenosylcob(III)alamin 5'-phosphate + GMP + H(+). The protein operates within cofactor biosynthesis; adenosylcobalamin biosynthesis; adenosylcobalamin from cob(II)yrinate a,c-diamide: step 7/7. Functionally, joins adenosylcobinamide-GDP and alpha-ribazole to generate adenosylcobalamin (Ado-cobalamin). Also synthesizes adenosylcobalamin 5'-phosphate from adenosylcobinamide-GDP and alpha-ribazole 5'-phosphate. In Prochlorococcus marinus (strain SARG / CCMP1375 / SS120), this protein is Adenosylcobinamide-GDP ribazoletransferase.